Consider the following 200-residue polypeptide: DNA-binding protein HupB (200 aa).

Residues 1–90 (MNKAELIDVL…PGAQFKAVVA (90 aa)) are bacterial histone-like domain. K3, K72, K86, K103, K137, K144, and K156 each carry N6-acetyllysine. A degenerate repeats region region spans residues 101–200 (AVKRGVATSA…KVTAAKRGRK (100 aa)). A disordered region spans residues 179–200 (AKKAAVKKAPAKKVTAAKRGRK).

This sequence belongs to the bacterial histone-like protein family. Long actinobacterial subfamily. Binds to human laminin-2. In terms of processing, may also be methylated and possibly phosphorylated in vivo.

The protein resides in the cytoplasm. The protein localises to the nucleoid. It localises to the secreted. It is found in the cell wall. Its subcellular location is the cell surface. The catalysed reaction is 4 Fe(2+) + O2 + 4 H(+) = 4 Fe(3+) + 2 H2O. In terms of biological role, a nucleoid-associated protein (NAP) that plays a role in local chromosome architecture and chromosome compactation. Required for biofilm formation, stress survival and possibly in cell wall assembly, probably influences transcription. RNase E and HupB jointly contribute to cellular adaptation to changing growth conditions and survival during antibiotic treatment and in the host. Its function is as follows. Binds Fe(3+) but not Fe(2+). Has ferroxidase activity, converts Fe(2+) into Fe(3+) and in the presence of H(2)O(2) prevents the generation of hydroxyl radicals (the Fenton reaction). Protects DNA from damage in the presence of FeSO(4) and H(2)O(2). May function in iron storage. Functionally, may be involved in entry into human Schwann cells. This Mycobacterium leprae (strain TN) protein is DNA-binding protein HupB.